A 39-amino-acid chain; its full sequence is Hementin (39 aa).

A divalent metal cation serves as cofactor. Expressed mainly in the posterior salivary glands and, to a lesser extent, in the anterior salivary glands and secreted into the proboscis (at protein level).

Its subcellular location is the secreted. Its activity is regulated as follows. Inhibited by EDTA, cysteine, DTT and sodium phosphate. Partially inhibited by EGTA, citrate, Tris and glycine. Not inhibited by DFP, PMSF, iodoacetic acid and leupeptin. Requires sodium chloride concentrations higher than 0.15 M for activity. In terms of biological role, metalloprotease with anticoagulant activity. Cleaves fibrinogen Aalpha (FGA), gamma (FGG) and Bbeta (FGB) chains after positions 'Asn-121', 'Lys-160' and 'Pro-102', respectively. Breaks down cross-linked and non-cross-linked fibrin clots. Prevents and reverts platelet aggregation induced by ADP and collagen. Prevents thrombin-induced platelet clotting. Does not affect plasma levels of coagulation factors prothrombin (F2), V (F5), VII (F7), VIII (F8), IX (F9), X (F10), XI (F11), XII (F12), plasma kallikrein (KLKB1) and kininogen-1 (KNG1). The chain is Hementin from Haementeria ghilianii (Amazon leech).